The chain runs to 530 residues: [Pyruvate dehydrogenase [acetyl-transferring]]-phosphatase 2, mitochondrial (530 aa).

A mitochondrion-targeting transit peptide spans 1–67 (MSSTASYRIF…FALRKAYRHT (67 aa)). The 412-residue stretch at 107-518 (VLRFESNQLA…DDITVMVVFF (412 aa)) folds into the PPM-type phosphatase domain. Asp-142, Gly-143, Asp-413, and Asp-509 together coordinate Mn(2+).

It belongs to the PP2C family. Mg(2+) is required as a cofactor. Highly expressed in liver.

The protein resides in the mitochondrion. The enzyme catalyses O-phospho-L-seryl-[pyruvate dehydrogenase E1 alpha subunit] + H2O = L-seryl-[pyruvate dehydrogenase E1 alpha subunit] + phosphate. Its activity is regulated as follows. Mg(2+)-dependent protein phosphatase. Phosphatase activity is increased in the presence of spermine, a naturally produced polyamine. Mitochondrial enzyme that catalyzes the dephosphorylation and concomitant reactivation of the alpha subunit of the E1 component of the pyruvate dehydrogenase complex (PDC), thereby stimulating the conversion of pyruvate into acetyl-CoA. Acts as a crucial regulator of T cell metabolism and function, with a particular focus on T-helper Th17. This chain is [Pyruvate dehydrogenase [acetyl-transferring]]-phosphatase 2, mitochondrial (Pdp2), found in Rattus norvegicus (Rat).